The primary structure comprises 110 residues: Large ribosomal subunit protein uL22 (110 aa).

This sequence belongs to the universal ribosomal protein uL22 family. In terms of assembly, part of the 50S ribosomal subunit.

This protein binds specifically to 23S rRNA; its binding is stimulated by other ribosomal proteins, e.g. L4, L17, and L20. It is important during the early stages of 50S assembly. It makes multiple contacts with different domains of the 23S rRNA in the assembled 50S subunit and ribosome. In terms of biological role, the globular domain of the protein is located near the polypeptide exit tunnel on the outside of the subunit, while an extended beta-hairpin is found that lines the wall of the exit tunnel in the center of the 70S ribosome. This Verminephrobacter eiseniae (strain EF01-2) protein is Large ribosomal subunit protein uL22.